A 502-amino-acid chain; its full sequence is Probable cobyric acid synthase (502 aa).

Residues 250–448 (KITIGTLRLP…FHGIFHNFEF (199 aa)) enclose the GATase cobBQ-type domain. The Nucleophile role is filled by Cys-330. His-440 is a catalytic residue.

It belongs to the CobB/CobQ family. CobQ subfamily.

The protein operates within cofactor biosynthesis; adenosylcobalamin biosynthesis. Its function is as follows. Catalyzes amidations at positions B, D, E, and G on adenosylcobyrinic A,C-diamide. NH(2) groups are provided by glutamine, and one molecule of ATP is hydrogenolyzed for each amidation. The sequence is that of Probable cobyric acid synthase from Methanosphaera stadtmanae (strain ATCC 43021 / DSM 3091 / JCM 11832 / MCB-3).